The chain runs to 66 residues: Large ribosomal subunit protein bL33c (66 aa).

This sequence belongs to the bacterial ribosomal protein bL33 family.

It localises to the plastid. It is found in the chloroplast. This is Large ribosomal subunit protein bL33c from Ipomoea purpurea (Common morning glory).